The chain runs to 185 residues: GTP-dependent dephospho-CoA kinase (185 aa).

The GTP site is built by D50, V52, D73, K75, and E128.

It belongs to the GTP-dependent DPCK family.

The catalysed reaction is 3'-dephospho-CoA + GTP = GDP + CoA + H(+). The protein operates within cofactor biosynthesis; coenzyme A biosynthesis. Catalyzes the GTP-dependent phosphorylation of the 3'-hydroxyl group of dephosphocoenzyme A to form coenzyme A (CoA). The sequence is that of GTP-dependent dephospho-CoA kinase from Aeropyrum pernix (strain ATCC 700893 / DSM 11879 / JCM 9820 / NBRC 100138 / K1).